We begin with the raw amino-acid sequence, 334 residues long: Ferredoxin--NADP reductase (334 aa).

The FAD site is built by Asp-33, Gln-41, Tyr-46, Ala-86, Phe-120, Asp-286, and Thr-327.

It belongs to the ferredoxin--NADP reductase type 2 family. As to quaternary structure, homodimer. FAD is required as a cofactor.

It catalyses the reaction 2 reduced [2Fe-2S]-[ferredoxin] + NADP(+) + H(+) = 2 oxidized [2Fe-2S]-[ferredoxin] + NADPH. The protein is Ferredoxin--NADP reductase of Rickettsia massiliae (strain Mtu5).